A 259-amino-acid chain; its full sequence is Thrombin-like enzyme gyroxin B1.7 (259 aa).

Positions 1–18 (MVLIRVLANLLILQLSYA) are cleaved as a signal peptide. Positions 19-259 (QKSSELVIGG…AGNTAVTCPP (241 aa)) are excised as a propeptide. The 226-residue stretch at 25–250 (VIGGDECNIN…DTEWIQSIIA (226 aa)) folds into the Peptidase S1 domain. 5 disulfides stabilise this stretch: Cys31–Cys162, Cys49–Cys65, Cys141–Cys211, Cys173–Cys190, and Cys201–Cys226. His64 functions as the Charge relay system in the catalytic mechanism. Asn102 carries an N-linked (GlcNAc...) asparagine glycan. Asp109 serves as the catalytic Charge relay system. The Charge relay system role is filled by Ser205.

The protein belongs to the peptidase S1 family. Snake venom subfamily. In terms of assembly, monomer. In terms of tissue distribution, expressed by the venom gland.

The protein localises to the secreted. Its function is as follows. Thrombin-like snake venom serine protease. Displays a specificity similar to trypsin. Releases only fibrinopeptide A in the conversion of fibrinogen to fibrin. Shows coagulant, esterase and amidase activities. Reversibly increases the permeability of the blood brain barrier (BBB) in mice. Induces the barrel rotation syndrome in mice, which is manifested by gyroxin-like, rapid rolling motions. This syndrome may be due to its effect on BBB permeability, and certainly also to other actions affecting endogenous substrates present in the endothelium, nervous tissues or blood. The polypeptide is Thrombin-like enzyme gyroxin B1.7 (Crotalus durissus terrificus (South American rattlesnake)).